A 37-amino-acid chain; its full sequence is Cytochrome b6-f complex subunit 5 (37 aa).

Residues 5–25 (LLSGIVPGLIPITLAGSFVIA) form a helical membrane-spanning segment.

The protein belongs to the PetG family. The 4 large subunits of the cytochrome b6-f complex are cytochrome b6, subunit IV (17 kDa polypeptide, PetD), cytochrome f and the Rieske protein, while the 4 small subunits are PetG, PetL, PetM and PetN. The complex functions as a dimer.

It localises to the plastid membrane. Its function is as follows. Component of the cytochrome b6-f complex, which mediates electron transfer between photosystem II (PSII) and photosystem I (PSI), cyclic electron flow around PSI, and state transitions. PetG is required for either the stability or assembly of the cytochrome b6-f complex. The polypeptide is Cytochrome b6-f complex subunit 5 (Aneura mirabilis (Parasitic liverwort)).